A 254-amino-acid polypeptide reads, in one-letter code: Imidazole glycerol phosphate synthase subunit HisF (254 aa).

Residues Asp-12 and Asp-131 contribute to the active site.

Belongs to the HisA/HisF family. In terms of assembly, heterodimer of HisH and HisF.

The protein localises to the cytoplasm. It catalyses the reaction 5-[(5-phospho-1-deoxy-D-ribulos-1-ylimino)methylamino]-1-(5-phospho-beta-D-ribosyl)imidazole-4-carboxamide + L-glutamine = D-erythro-1-(imidazol-4-yl)glycerol 3-phosphate + 5-amino-1-(5-phospho-beta-D-ribosyl)imidazole-4-carboxamide + L-glutamate + H(+). It functions in the pathway amino-acid biosynthesis; L-histidine biosynthesis; L-histidine from 5-phospho-alpha-D-ribose 1-diphosphate: step 5/9. Functionally, IGPS catalyzes the conversion of PRFAR and glutamine to IGP, AICAR and glutamate. The HisF subunit catalyzes the cyclization activity that produces IGP and AICAR from PRFAR using the ammonia provided by the HisH subunit. This is Imidazole glycerol phosphate synthase subunit HisF from Desulfitobacterium hafniense (strain Y51).